The chain runs to 419 residues: Protein FAM181B (419 aa).

The disordered stretch occupies residues 107 to 157 (LMGAAPPGPSSPGAADTPAKRPLAGAQTVPVPVPAHGKAAPRREASQAAAA).

This sequence belongs to the FAM181 family.

This chain is Protein FAM181B (FAM181B), found in Bos taurus (Bovine).